The primary structure comprises 318 residues: 1-phosphofructokinase (318 aa).

Residues 228-233 (SMGTEG) and 259-260 (GD) each bind ATP. The active-site Proton acceptor is Asp260.

The protein belongs to the carbohydrate kinase PfkB family.

The catalysed reaction is beta-D-fructose 1-phosphate + ATP = beta-D-fructose 1,6-bisphosphate + ADP + H(+). Its function is as follows. Catalyzes the ATP-dependent phosphorylation of fructose-l-phosphate to fructose-l,6-bisphosphate. The polypeptide is 1-phosphofructokinase (Xanthomonas campestris pv. campestris (strain ATCC 33913 / DSM 3586 / NCPPB 528 / LMG 568 / P 25)).